The following is a 1180-amino-acid chain: DNA-directed RNA polymerase subunit beta (1180 aa).

It belongs to the RNA polymerase beta chain family. As to quaternary structure, the RNAP catalytic core consists of 2 alpha, 1 beta, 1 beta' and 1 omega subunit. When a sigma factor is associated with the core the holoenzyme is formed, which can initiate transcription.

The catalysed reaction is RNA(n) + a ribonucleoside 5'-triphosphate = RNA(n+1) + diphosphate. DNA-dependent RNA polymerase catalyzes the transcription of DNA into RNA using the four ribonucleoside triphosphates as substrates. This chain is DNA-directed RNA polymerase subunit beta, found in Macrococcus caseolyticus (strain JCSC5402) (Macrococcoides caseolyticum).